Reading from the N-terminus, the 168-residue chain is Crossover junction endodeoxyribonuclease RuvC (168 aa).

Active-site residues include aspartate 9, glutamate 70, and aspartate 145. Residues aspartate 9, glutamate 70, and aspartate 145 each contribute to the Mg(2+) site.

The protein belongs to the RuvC family. In terms of assembly, homodimer which binds Holliday junction (HJ) DNA. The HJ becomes 2-fold symmetrical on binding to RuvC with unstacked arms; it has a different conformation from HJ DNA in complex with RuvA. In the full resolvosome a probable DNA-RuvA(4)-RuvB(12)-RuvC(2) complex forms which resolves the HJ. Mg(2+) is required as a cofactor.

It localises to the cytoplasm. It carries out the reaction Endonucleolytic cleavage at a junction such as a reciprocal single-stranded crossover between two homologous DNA duplexes (Holliday junction).. In terms of biological role, the RuvA-RuvB-RuvC complex processes Holliday junction (HJ) DNA during genetic recombination and DNA repair. Endonuclease that resolves HJ intermediates. Cleaves cruciform DNA by making single-stranded nicks across the HJ at symmetrical positions within the homologous arms, yielding a 5'-phosphate and a 3'-hydroxyl group; requires a central core of homology in the junction. The consensus cleavage sequence is 5'-(A/T)TT(C/G)-3'. Cleavage occurs on the 3'-side of the TT dinucleotide at the point of strand exchange. HJ branch migration catalyzed by RuvA-RuvB allows RuvC to scan DNA until it finds its consensus sequence, where it cleaves and resolves the cruciform DNA. This Chlamydia pneumoniae (Chlamydophila pneumoniae) protein is Crossover junction endodeoxyribonuclease RuvC.